Here is a 209-residue protein sequence, read N- to C-terminus: Ribosomal RNA large subunit methyltransferase E (209 aa).

G63, W65, D83, D99, and D124 together coordinate S-adenosyl-L-methionine. The Proton acceptor role is filled by K164.

The protein belongs to the class I-like SAM-binding methyltransferase superfamily. RNA methyltransferase RlmE family.

The protein resides in the cytoplasm. It carries out the reaction uridine(2552) in 23S rRNA + S-adenosyl-L-methionine = 2'-O-methyluridine(2552) in 23S rRNA + S-adenosyl-L-homocysteine + H(+). In terms of biological role, specifically methylates the uridine in position 2552 of 23S rRNA at the 2'-O position of the ribose in the fully assembled 50S ribosomal subunit. The polypeptide is Ribosomal RNA large subunit methyltransferase E (Vibrio vulnificus (strain CMCP6)).